Reading from the N-terminus, the 130-residue chain is MSMQDPIADMLTRIRNGQAANKVAVTMPSAKLKVAIANVLKEEGFIEDFKVEGDTKPELELTLKYFQGKAVVESIQRVSRPGLRIYKKKDELPKVMAGLGIAVVSTSKGVMTDRAARQAGLGGEIICYVA.

This sequence belongs to the universal ribosomal protein uS8 family. Part of the 30S ribosomal subunit. Contacts proteins S5 and S12.

One of the primary rRNA binding proteins, it binds directly to 16S rRNA central domain where it helps coordinate assembly of the platform of the 30S subunit. The sequence is that of Small ribosomal subunit protein uS8 from Enterobacter sp. (strain 638).